The primary structure comprises 949 residues: MKYLASFRTTLKASRYMFRALALVLWLLIAFSSVFYIVNALHQRESEIRQEFNLSSDQAQRFIQRTSDVMKELKYIAENRLSAENGVLSPRGRETQADVPAFEPLFADSDCSAMSNTWRGSLESLAWFMRYWRDNFSAAYDLNRVFLIGSDNLCMANFGLRDMPVERDTALKALHERINKYRNAPQDDSGSNLYWISEGPRPGVGYFYALTPVYLANRLQALLGVEQTIRMENFFLPGTLPMGVTILDENGHTLISLTGPESKIKGDPRWMQERSWFGYTEGFRELVLKKNLPPSSLSIVYSVPVDKVLERIRMLILNAILLNVLAGAALFTLARMYERRIFIPAESDALRLEEHEQFNRKIVASAPVGICILRTADGVNILSNELAHTYLNMLTHEDRQRLTQIICGQQVNFVDVLTSNNTNLQISFVHSRYRNENVAICVLVDVSSRVKMEESLQEMAQAAEQASQSKSMFLATVSHELRTPLYGIIGNLDLLQTKELPKGVDRLVTAMNNSSSLLLKIISDILDFSKIESEQLKIEPREFSPREVMNHITANYLPLVVRKQLGLYCFIEPDVPVALNGDPMRLQQVISNLLSNAIKFTDTGCIVLHVRADGDYLSIRVRDTGVGIPAKEVVRLFDPFFQVGTGVQRNFQGTGLGLAICEKLISMMDGDISVDSEPGMGSQFTVRIPLYGAQYPQKKGVEGLSGKRCWLAVRNASLCQFLETSLQRSGIVVTTYEGQEPTPEDVLITDEVVSKKWQGRAVVTFCRRHIGIPLEKAPGEWVHSVAAPHELPALLARIYLIEMESDDPANALPSTDKAVSDNDDMMILVVDDHPINRRLLADQLGSLGYQCKTANDGVDALNVLSKNHIDIVLSDVNMPNMDGYRLTQRIRQLGLTLPVIGVTANALAEEKQRCLESGMDSCLSKPVTLDVIKQTLTLYAERVRKSRDS.

Over 1–19 (MKYLASFRTTLKASRYMFR) the chain is Cytoplasmic. The helical transmembrane segment at 20-41 (ALALVLWLLIAFSSVFYIVNAL) threads the bilayer. Over 42–313 (HQRESEIRQE…PVDKVLERIR (272 aa)) the chain is Periplasmic. Residues 314-335 (MLILNAILLNVLAGAALFTLAR) traverse the membrane as a helical segment. Topologically, residues 336 to 949 (MYERRIFIPA…AERVRKSRDS (614 aa)) are cytoplasmic. The 69-residue stretch at 357–425 (QFNRKIVASA…VLTSNNTNLQ (69 aa)) folds into the PAS domain. Residues 476–692 (TVSHELRTPL…QFTVRIPLYG (217 aa)) form the Histidine kinase domain. The residue at position 479 (histidine 479) is a Phosphohistidine; by autocatalysis. Positions 705 to 805 (SGKRCWLAVR…ARIYLIEMES (101 aa)) constitute an ABL domain. In terms of domain architecture, Response regulatory spans 826-940 (MILVVDDHPI…VIKQTLTLYA (115 aa)). Aspartate 875 carries the 4-aspartylphosphate modification.

The protein belongs to the RcsC family. Interacts with RcsD. Post-translationally, autophosphorylated. Activation probably requires a transfer of a phosphate group from a His in the transmitter domain to an Asp in the receiver domain.

It localises to the cell inner membrane. The enzyme catalyses ATP + protein L-histidine = ADP + protein N-phospho-L-histidine.. The Rcs phosphorelay may be activated by RcsF. DjlA, LolA and OmpG might act as a regulator of the phosphorelay. Activity is probably up-regulated by YmgA/AriR, and possibly down-regulated by YcgZ, all 3 are connector proteins providing additional signal input into signaling system. In terms of biological role, component of the Rcs signaling system, which controls transcription of numerous genes. RcsC functions as a membrane-associated protein kinase that phosphorylates RcsD in response to environmental signals. The phosphoryl group is then transferred to the response regulator RcsB. RcsC also has phosphatase activity. The system controls expression of genes involved in colanic acid capsule synthesis, biofilm formation and cell division. The sequence is that of Sensor histidine kinase RcsC from Escherichia coli (strain K12).